Here is a 106-residue protein sequence, read N- to C-terminus: Large ribosomal subunit protein uL24 (106 aa).

The protein belongs to the universal ribosomal protein uL24 family. In terms of assembly, part of the 50S ribosomal subunit.

In terms of biological role, one of two assembly initiator proteins, it binds directly to the 5'-end of the 23S rRNA, where it nucleates assembly of the 50S subunit. One of the proteins that surrounds the polypeptide exit tunnel on the outside of the subunit. This chain is Large ribosomal subunit protein uL24, found in Acinetobacter baylyi (strain ATCC 33305 / BD413 / ADP1).